Here is a 201-residue protein sequence, read N- to C-terminus: Small ribosomal subunit protein uS4 (201 aa).

The region spanning 91 to 154 (TRLDNVVYRA…RKMEWFEEAQ (64 aa)) is the S4 RNA-binding domain.

It belongs to the universal ribosomal protein uS4 family. In terms of assembly, part of the 30S ribosomal subunit. Contacts protein S5. The interaction surface between S4 and S5 is involved in control of translational fidelity.

One of the primary rRNA binding proteins, it binds directly to 16S rRNA where it nucleates assembly of the body of the 30S subunit. Functionally, with S5 and S12 plays an important role in translational accuracy. The chain is Small ribosomal subunit protein uS4 from Corynebacterium ammoniagenes (Brevibacterium ammoniagenes).